The primary structure comprises 440 residues: General transcription factor IIE subunit 1 (440 aa).

N-acetylalanine is present on alanine 2. The HTH TFE/IIEalpha-type domain maps to 14 to 104 (LKRLAKYVIR…NYRTLVNVVK (91 aa)). Lysine 67 bears the N6-acetyllysine mark. The Zn(2+) site is built by cysteine 129, cysteine 132, cysteine 154, and cysteine 157. The segment at 129–157 (CPVCCSTFTDLEANQLFDPMTGTFRCTFC) adopts a C4-type zinc-finger fold. Phosphoserine is present on serine 268. The span at 333–353 (SSVTAGSVGAAAPVTAANGSD) shows a compositional bias: low complexity. The interval 333 to 395 (SSVTAGSVGA…EEFEEVADDP (63 aa)) is disordered. Acidic residues-rich tracts occupy residues 354–364 (SESETSESDDD) and 381–393 (EDEE…EVAD).

The protein belongs to the TFIIE alpha subunit family. In terms of assembly, tetramer of two alpha and two beta chains. Interacts with TAF6/TAFII80. Interacts with ATF7IP. Interacts with SND1. Part of TBP-based Pol II pre-initiation complex (PIC), in which Pol II core assembles with general transcription factors and other specific initiation factors including GTF2E1, GTF2E2, GTF2F1, GTF2F2, TCEA1, ERCC2, ERCC3, GTF2H2, GTF2H3, GTF2H4, GTF2H5, GTF2A1, GTF2A2, GTF2B and TBP; this large multi-subunit PIC complex mediates DNA unwinding and targets Pol II core to the transcription start site where the first phosphodiester bond forms.

The protein localises to the nucleus. Recruits TFIIH to the initiation complex and stimulates the RNA polymerase II C-terminal domain kinase and DNA-dependent ATPase activities of TFIIH. Both TFIIH and TFIIE are required for promoter clearance by RNA polymerase. This Mus musculus (Mouse) protein is General transcription factor IIE subunit 1 (Gtf2e1).